The chain runs to 183 residues: Der GTPase-activating protein YihI (183 aa).

Residues 1-101 (MSRSKKTRKG…KLTDEQKLLK (101 aa)) are disordered. Basic and acidic residues-rich tracts occupy residues 22–46 (KKQDRAEVTGKRAEKGNKSGSRHNE) and 92–101 (KLTDEQKLLK).

This sequence belongs to the YihI family. Interacts with Der.

A GTPase-activating protein (GAP) that modifies Der/EngA GTPase function. May play a role in ribosome biogenesis. The chain is Der GTPase-activating protein YihI from Shewanella oneidensis (strain ATCC 700550 / JCM 31522 / CIP 106686 / LMG 19005 / NCIMB 14063 / MR-1).